Reading from the N-terminus, the 226-residue chain is Lipoprotein-releasing system ATP-binding protein LolD (226 aa).

The region spanning Phe5–Val225 is the ABC transporter domain. Gly40 to Ser47 serves as a coordination point for ATP.

It belongs to the ABC transporter superfamily. Lipoprotein translocase (TC 3.A.1.125) family. In terms of assembly, the complex is composed of two ATP-binding proteins (LolD) and two transmembrane proteins (LolC and LolE).

The protein resides in the cell inner membrane. In terms of biological role, part of the ABC transporter complex LolCDE involved in the translocation of mature outer membrane-directed lipoproteins, from the inner membrane to the periplasmic chaperone, LolA. Responsible for the formation of the LolA-lipoprotein complex in an ATP-dependent manner. The polypeptide is Lipoprotein-releasing system ATP-binding protein LolD (Ehrlichia canis (strain Jake)).